The primary structure comprises 212 residues: MGTEFNGLFDEWAHTYDSFVQGEDIQYKEVFAHYEDILEDVVNKSFGNVLEFGVGTGNLTNKLLLAGRTVYGIEPSREMRMIAKEKLPKEFSITEGDFLSFEVPNSIDTIVSTYAFHHLTDDEKNVAIAKYSQLLNKGGKIVFADTIFADQDAYDKTVETAKERGFHQLANDLQTEYYTRIPVMQTIFENNGFHVTFTRLNHFVWVMEATKQ.

S-adenosyl-L-methionine contacts are provided by glycine 53, glutamate 74, and aspartate 97.

Belongs to the methyltransferase superfamily. YrrT family.

Functionally, could be a S-adenosyl-L-methionine-dependent methyltransferase. This is an uncharacterized protein from Bacillus cereus (strain ATCC 14579 / DSM 31 / CCUG 7414 / JCM 2152 / NBRC 15305 / NCIMB 9373 / NCTC 2599 / NRRL B-3711).